The primary structure comprises 293 residues: Movement protein BC1 (293 aa).

This sequence belongs to the begomovirus movement protein BC1 family. Binds to dimeric supercoiled plasmid DNA. Post-translationally, phosphorylated.

It localises to the host cell membrane. It is found in the host microsome membrane. The protein resides in the host endoplasmic reticulum membrane. Transports viral genome to neighboring plant cells directly through plasmosdesmata, without any budding. The movement protein allows efficient cell to cell propagation, by bypassing the host cell wall barrier. Begomovirus genome is shuttled out of nucleus by Nuclear shuttle protein (NSP) and the movement protein transports the DNA-NSP complex to cell plasmodesmata and facilitates further movement across the cell wall. The protein is Movement protein BC1 of Macroptilium lathyroides (Lima bean).